We begin with the raw amino-acid sequence, 752 residues long: Myb-related protein A (752 aa).

Positions 1-22 (MAKRSRSEDEDDDLQYADHDYE) are disordered. HTH myb-type domains are found at residues 30–81 (KKLW…QKVL), 82–137 (NPEL…NPEV), and 138–188 (KKSS…RRKV). 3 DNA-binding regions (H-T-H motif) span residues 58–81 (WTLI…QKVL), 110–133 (WSLI…HNHL), and 161–184 (WAEI…NSTM). Residue lysine 199 forms a Glycyl lysine isopeptide (Lys-Gly) (interchain with G-Cter in SUMO2) linkage. Positions 230–295 (IPGYQYVSPE…RIPSQPGSFS (66 aa)) are transcriptional activation domain. The segment at 298–553 (SGSFLMDDNM…IRRSILGTTP (256 aa)) is negative regulatory domain. Lysine 394 carries the N6-acetyllysine modification. The tract at residues 451 to 480 (RKMRVGHSPGSELRDGSLNDGGNMALKHTP) is disordered. Residues lysine 592 and lysine 602 each participate in a glycyl lysine isopeptide (Lys-Gly) (interchain with G-Cter in SUMO2) cross-link.

Component of the DREAM complex (also named LINC complex) at least composed of E2F4, E2F5, LIN9, LIN37, LIN52, LIN54, MYBL1, MYBL2, RBL1, RBL2, RBBP4, TFDP1 and TFDP2. The complex exists in quiescent cells where it represses cell cycle-dependent genes. It dissociates in S phase when LIN9, LIN37, LIN52 and LIN54 form a subcomplex that binds to MYBL2. In terms of tissue distribution, expressed in a variety of lymphoid and solid tumor lines cultured in vitro.

It is found in the nucleus. Transcription factor that specifically recognizes the sequence 5'-YAAC[GT]G-3'. Acts as a master regulator of male meiosis by promoting expression of piRNAs: activates expression of both piRNA precursor RNAs and expression of protein-coding genes involved in piRNA metabolism. The piRNA metabolic process mediates the repression of transposable elements during meiosis by forming complexes composed of piRNAs and Piwi proteins and governs the methylation and subsequent repression of transposons, which is essential for the germline integrity. Transcriptional activator of SOX30. The chain is Myb-related protein A (MYBL1) from Homo sapiens (Human).